The primary structure comprises 353 residues: Ribosomal RNA large subunit methyltransferase M (353 aa).

Residues S183, 216 to 219 (APGG), D235, D255, and D271 each bind S-adenosyl-L-methionine. Residue K300 is the Proton acceptor of the active site.

Belongs to the class I-like SAM-binding methyltransferase superfamily. RNA methyltransferase RlmE family. RlmM subfamily. As to quaternary structure, monomer.

It localises to the cytoplasm. The catalysed reaction is cytidine(2498) in 23S rRNA + S-adenosyl-L-methionine = 2'-O-methylcytidine(2498) in 23S rRNA + S-adenosyl-L-homocysteine + H(+). Its function is as follows. Catalyzes the 2'-O-methylation at nucleotide C2498 in 23S rRNA. The sequence is that of Ribosomal RNA large subunit methyltransferase M from Azotobacter vinelandii (strain DJ / ATCC BAA-1303).